Reading from the N-terminus, the 150-residue chain is Ribonuclease K6 (150 aa).

The first 23 residues, 1 to 23 (MVLCFPLLLLVLVLWGQVCPLHA), serve as a signal peptide directing secretion. Residue His-38 is the Proton acceptor of the active site. 4 disulfides stabilise this stretch: Cys-46/Cys-104, Cys-60/Cys-114, Cys-78/Cys-129, and Cys-85/Cys-92. Asn-55 carries an N-linked (GlcNAc...) asparagine glycan. Substrate-binding positions include 61 to 65 (KPQNT) and Lys-86. Residue Asn-100 is glycosylated (N-linked (GlcNAc...) asparagine). Arg-105 contacts substrate. His-145 (proton donor) is an active-site residue.

This sequence belongs to the pancreatic ribonuclease family. As to quaternary structure, interacts (via N-terminus) with bacterial lipopolysaccharide (LPS).

The protein resides in the secreted. It is found in the lysosome. The protein localises to the cytoplasmic granule. Functionally, ribonuclease which shows a preference for the pyrimidines uridine and cytosine. Has potent antibacterial activity against a range of Gram-positive and Gram-negative bacteria, including P.aeruginosa, A.baumanii, M.luteus, S.aureus, E.faecalis, E.faecium, S.saprophyticus and E.coli. Causes loss of bacterial membrane integrity, and also promotes agglutination of Gram-negative bacteria. Probably contributes to urinary tract sterility. Bactericidal activity is independent of RNase activity. The polypeptide is Ribonuclease K6 (RNASE6) (Aotus trivirgatus (Three-striped night monkey)).